The primary structure comprises 315 residues: Solute carrier family 25 member 32 (315 aa).

3 Solcar repeats span residues 20-109 (HVRY…IKSY), 118-209 (LEAT…LKLK), and 222-306 (LSTV…VSHF). The next 6 helical transmembrane spans lie at 26 to 43 (LIAGVSGGVLSNLALHPL), 89 to 106 (IWGAGLSWGLYFFFYNAI), 123 to 143 (YLVSAAEAGAMTLCITNPLWV), 186 to 203 (FVPGLFGTSHGALQFMAY), 227 to 243 (YISVAALSKIFAVAATY), and 281 to 300 (GIAPNLIRVTPACCITFVVY).

Belongs to the mitochondrial carrier (TC 2.A.29) family. As to expression, ubiquitous.

The protein resides in the mitochondrion inner membrane. The catalysed reaction is FAD(in) = FAD(out). In terms of biological role, facilitates flavin adenine dinucleotide (FAD) translocation across the mitochondrial inner membrane into the mitochondrial matrix where it acts as a redox cofactor to assist flavoenzyme activities in fundamental metabolic processes including fatty acid beta-oxidation, amino acid and choline metabolism as well as mitochondrial electron transportation. In particular, provides FAD to DLD dehydrogenase of the glycine cleavage system, part of mitochondrial one-carbon metabolic pathway involved in neural tube closure in early embryogenesis. The chain is Solute carrier family 25 member 32 from Homo sapiens (Human).